The following is a 346-amino-acid chain: Phenylalanine--tRNA ligase alpha subunit (346 aa).

Residue Glu-261 coordinates Mg(2+).

It belongs to the class-II aminoacyl-tRNA synthetase family. Phe-tRNA synthetase alpha subunit type 1 subfamily. In terms of assembly, tetramer of two alpha and two beta subunits. Mg(2+) is required as a cofactor.

Its subcellular location is the cytoplasm. It catalyses the reaction tRNA(Phe) + L-phenylalanine + ATP = L-phenylalanyl-tRNA(Phe) + AMP + diphosphate + H(+). The sequence is that of Phenylalanine--tRNA ligase alpha subunit from Streptococcus agalactiae serotype III (strain NEM316).